Reading from the N-terminus, the 78-residue chain is MNLCLSSLLFFLVILLPSGKGMFGNDGVKVRTCTSQKAVCFFGCPPGYRWIAFCHNILSCCKNMTRFQPLQAKDPWVH.

A signal peptide spans 1 to 21 (MNLCLSSLLFFLVILLPSGKG). Disulfide bonds link C33/C60, C40/C54, and C44/C61.

This sequence belongs to the beta-defensin family.

Its subcellular location is the secreted. Its function is as follows. Host defense peptide that exhibits antimicrobial and antifungal activity. Exhibits antimicrobial activity against E.coli, S.aureus and C.albicans (in vitro). Has high lipopolysaccharide (LPS)-binding affinity, and may thereby be involved in immunoregulation through LPS neutralization. The sequence is that of Defensin beta 136 (DEFB136) from Pan troglodytes (Chimpanzee).